The primary structure comprises 557 residues: Urocanate hydratase (557 aa).

Positions 1–20 are disordered; sequence MSNPRHNEREVRSPRGDELN. NAD(+) contacts are provided by residues 52-53, Q130, 176-178, E196, R201, 242-243, 263-267, 273-274, and Y322; these read GG, GMG, NA, QTSAH, and YL. The active site involves C410. G492 lines the NAD(+) pocket.

It belongs to the urocanase family. NAD(+) serves as cofactor.

Its subcellular location is the cytoplasm. The catalysed reaction is 4-imidazolone-5-propanoate = trans-urocanate + H2O. The protein operates within amino-acid degradation; L-histidine degradation into L-glutamate; N-formimidoyl-L-glutamate from L-histidine: step 2/3. In terms of biological role, catalyzes the conversion of urocanate to 4-imidazolone-5-propionate. This Brucella suis (strain ATCC 23445 / NCTC 10510) protein is Urocanate hydratase.